Reading from the N-terminus, the 473-residue chain is MAP kinase-activated protein kinase 5 (473 aa).

In terms of domain architecture, Protein kinase spans isoleucine 22–leucine 304. ATP is bound by residues leucine 28–valine 36 and lysine 51. Phosphoserine; by PKA is present on serine 115. Catalysis depends on aspartate 148, which acts as the Proton acceptor. Threonine 182 is modified (phosphothreonine; by MAPK11, MAPK14, MAPK4, MAPK6 and PKA). Phosphoserine occurs at positions 212 and 354. Residues glutamate 409–serine 440 are a coiled coil.

The protein belongs to the protein kinase superfamily. CAMK Ser/Thr protein kinase family. As to quaternary structure, interacts with ERK3/MAPK6 and ERK4/MAPK4 (via FRIEDE motif); the interaction is direct. Interacts with YWHAE; the interaction prevents phosphorylation of HSP27/HSPB1 leading to disrupt F-actin polymerization. Interacts with SQSTM1. In terms of processing, phosphorylated on Thr-182 ERK3/MAPK6 or ERK4/MAPK4; which is the regulatory phosphorylation site and is located on the T-loop/loop 12, leading to activation. Phosphorylation at Thr-182 by p38-alpha/MAPK14, p38-beta/MAPK11 is subject to debate. Phosphorylated at Ser-115 by PKA/PRKACA, leading to localization to the cytoplasm. Autophosphorylated. In terms of tissue distribution, expressed ubiquitously.

Its subcellular location is the cytoplasm. The protein resides in the nucleus. The catalysed reaction is L-seryl-[protein] + ATP = O-phospho-L-seryl-[protein] + ADP + H(+). It catalyses the reaction L-threonyl-[protein] + ATP = O-phospho-L-threonyl-[protein] + ADP + H(+). With respect to regulation, activated following phosphorylation at Thr-182 by p38-alpha/MAPK14, p38-beta/MAPK11, ERK2/MAPK1, ERK3/MAPK6, and ERK4/MAPK4. Activated by stress-related extracellular stimuli; such as H(2)O(2), arsenite, anisomycin TNF alpha and also PMA and the calcium ionophore A23187; but to a lesser extent. In vitro, activated by SQSTM1. Inhibited by diterpenoid alkaloid noroxoaconitine. Tumor suppressor serine/threonine-protein kinase involved in mTORC1 signaling and post-transcriptional regulation. Phosphorylates FOXO3, ERK3/MAPK6, ERK4/MAPK4, HSP27/HSPB1, p53/TP53 and RHEB. Acts as a tumor suppressor by mediating Ras-induced senescence and phosphorylating p53/TP53. Involved in post-transcriptional regulation of MYC by mediating phosphorylation of FOXO3: phosphorylation of FOXO3 leads to promote nuclear localization of FOXO3, enabling expression of miR-34b and miR-34c, 2 post-transcriptional regulators of MYC that bind to the 3'UTR of MYC transcript and prevent MYC translation. Acts as a negative regulator of mTORC1 signaling by mediating phosphorylation and inhibition of RHEB. Part of the atypical MAPK signaling via its interaction with ERK3/MAPK6 or ERK4/MAPK4: the precise role of the complex formed with ERK3/MAPK6 or ERK4/MAPK4 is still unclear, but the complex follows a complex set of phosphorylation events: upon interaction with atypical MAPK (ERK3/MAPK6 or ERK4/MAPK4), ERK3/MAPK6 (or ERK4/MAPK4) is phosphorylated and then mediates phosphorylation and activation of MAPKAPK5, which in turn phosphorylates ERK3/MAPK6 (or ERK4/MAPK4). Mediates phosphorylation of HSP27/HSPB1 in response to PKA/PRKACA stimulation, inducing F-actin rearrangement. The polypeptide is MAP kinase-activated protein kinase 5 (MAPKAPK5) (Homo sapiens (Human)).